The chain runs to 137 residues: Large ribosomal subunit protein uL16 (137 aa).

Belongs to the universal ribosomal protein uL16 family. In terms of assembly, part of the 50S ribosomal subunit.

Binds 23S rRNA and is also seen to make contacts with the A and possibly P site tRNAs. This chain is Large ribosomal subunit protein uL16, found in Rhizobium rhizogenes (strain K84 / ATCC BAA-868) (Agrobacterium radiobacter).